Reading from the N-terminus, the 272-residue chain is Putative hydro-lyase BBta_2883 (272 aa).

Belongs to the D-glutamate cyclase family.

This chain is Putative hydro-lyase BBta_2883, found in Bradyrhizobium sp. (strain BTAi1 / ATCC BAA-1182).